A 403-amino-acid chain; its full sequence is S-adenosylmethionine:tRNA ribosyltransferase-isomerase (403 aa).

It belongs to the QueA family. In terms of assembly, monomer.

The protein localises to the cytoplasm. It catalyses the reaction 7-aminomethyl-7-carbaguanosine(34) in tRNA + S-adenosyl-L-methionine = epoxyqueuosine(34) in tRNA + adenine + L-methionine + 2 H(+). It functions in the pathway tRNA modification; tRNA-queuosine biosynthesis. Functionally, transfers and isomerizes the ribose moiety from AdoMet to the 7-aminomethyl group of 7-deazaguanine (preQ1-tRNA) to give epoxyqueuosine (oQ-tRNA). This chain is S-adenosylmethionine:tRNA ribosyltransferase-isomerase, found in Psychrobacter arcticus (strain DSM 17307 / VKM B-2377 / 273-4).